Consider the following 577-residue polypeptide: Peroxynitrite isomerase THAP4 (577 aa).

A THAP-type zinc finger spans residues 1–85 (MVICCAAVNC…LKPTAVPSIF (85 aa)). The segment at 84–221 (IFHLTEKKRG…DKSGISMDDF (138 aa)) is disordered. Residues 157-170 (AAQEAASQEQAQQA) are compositionally biased toward low complexity. Ser163 is subject to Phosphoserine. Residues 235–238 (LHSY) carry the HCFC1-binding motif (HBM) motif. Ser239 carries the post-translational modification Phosphoserine. A disordered region spans residues 240-324 (FSSKHTRERP…AVQSEHSDAS (85 aa)). Residues 247 to 266 (ERPSVPREPIDRKRLKKDVE) are compositionally biased toward basic and acidic residues. Low complexity predominate over residues 290–300 (TATPQKPSQSP). The nitrobindin stretch occupies residues 415–577 (PPKMNPVVEP…LHVTYKKVTP (163 aa)). Heme b is bound by residues Thr444 and His567.

In the C-terminal section; belongs to the nitrobindin family. Homodimer. Requires heme b as cofactor.

Its subcellular location is the cytoplasm. The protein resides in the nucleus. The catalysed reaction is peroxynitrite = nitrate. It participates in nitrogen metabolism. Functionally, heme-binding protein able to scavenge peroxynitrite and to protect free L-tyrosine against peroxynitrite-mediated nitration, by acting as a peroxynitrite isomerase that converts peroxynitrite to nitrate. Therefore, this protein likely plays a role in peroxynitrite sensing and in the detoxification of reactive nitrogen and oxygen species (RNS and ROS, respectively). Is able to bind nitric oxide (NO) in vitro, but may act as a sensor of peroxynitrite levels in vivo, possibly modulating the transcriptional activity residing in the N-terminal region. The chain is Peroxynitrite isomerase THAP4 from Homo sapiens (Human).